Consider the following 549-residue polypeptide: Chaperonin GroEL 2 (549 aa).

ATP contacts are provided by residues 30-33, K51, 87-91, G415, 479-481, and D495; these read TLGP, DGTTT, and NAA.

It belongs to the chaperonin (HSP60) family. In terms of assembly, forms a cylinder of 14 subunits composed of two heptameric rings stacked back-to-back. Interacts with the co-chaperonin GroES.

It localises to the cytoplasm. The enzyme catalyses ATP + H2O + a folded polypeptide = ADP + phosphate + an unfolded polypeptide.. Together with its co-chaperonin GroES, plays an essential role in assisting protein folding. The GroEL-GroES system forms a nano-cage that allows encapsulation of the non-native substrate proteins and provides a physical environment optimized to promote and accelerate protein folding. This is Chaperonin GroEL 2 from Polaromonas naphthalenivorans (strain CJ2).